The sequence spans 216 residues: Leucyl/phenylalanyl-tRNA--protein transferase (216 aa).

The protein belongs to the L/F-transferase family.

Its subcellular location is the cytoplasm. It catalyses the reaction N-terminal L-lysyl-[protein] + L-leucyl-tRNA(Leu) = N-terminal L-leucyl-L-lysyl-[protein] + tRNA(Leu) + H(+). The catalysed reaction is N-terminal L-arginyl-[protein] + L-leucyl-tRNA(Leu) = N-terminal L-leucyl-L-arginyl-[protein] + tRNA(Leu) + H(+). It carries out the reaction L-phenylalanyl-tRNA(Phe) + an N-terminal L-alpha-aminoacyl-[protein] = an N-terminal L-phenylalanyl-L-alpha-aminoacyl-[protein] + tRNA(Phe). Its function is as follows. Functions in the N-end rule pathway of protein degradation where it conjugates Leu, Phe and, less efficiently, Met from aminoacyl-tRNAs to the N-termini of proteins containing an N-terminal arginine or lysine. This chain is Leucyl/phenylalanyl-tRNA--protein transferase, found in Maricaulis maris (strain MCS10) (Caulobacter maris).